Consider the following 509-residue polypeptide: uncharacterized protein (509 aa).

The next 13 membrane-spanning stretches (helical) occupy residues 14-34, 117-137, 158-178, 188-208, 209-229, 240-260, 303-323, 324-344, 359-379, 399-419, 423-443, 458-478, and 484-504; these read SAFTILFAILILAVGLTWVIP, TIEAVDVMVFIFVLGGMIGVI, EFFIVFCVSVLMVLGGTTCGI, ILVPVFLALGYDAIVCVGAIF, LAASMGTAFSTINPFSVVIAS, IGFRALGLVLGATCVIAYLYW, LILTLFCISFPIMIWGVMVGG, WWFPQMAASFLAITIIIMFIS, ASELVGVSLIIGLARGVNLVL, MPGSVFILGQLVVFIFLGLIV, SGLAVLSMPIMAPLADSVGIP, MLFLAPTGLVLVTLQMLQIPF, and FVMPMIGCLLLIGSILLVVQV.

To E.coli YfcC. This sequence to B.subtilis YcgA.

The protein localises to the cell membrane. This is an uncharacterized protein from Haemophilus influenzae (strain ATCC 51907 / DSM 11121 / KW20 / Rd).